The chain runs to 350 residues: Ion-translocating oxidoreductase complex subunit D (350 aa).

Transmembrane regions (helical) follow at residues 36-56, 89-109, and 124-144; these read CYFF…IAVA, IPAL…ILVV, and AMAA…TWVA. Threonine 185 carries the post-translational modification FMN phosphoryl threonine. Transmembrane regions (helical) follow at residues 212 to 232, 239 to 259, 265 to 285, 298 to 318, and 319 to 339; these read GFGI…LVML, WQIS…GYLL, MGPL…FIAT, LIFG…CGYP, and DAFA…DYYV.

It belongs to the NqrB/RnfD family. The complex is composed of six subunits: RnfA, RnfB, RnfC, RnfD, RnfE and RnfG. The cofactor is FMN.

The protein resides in the cell inner membrane. Functionally, part of a membrane-bound complex that couples electron transfer with translocation of ions across the membrane. This is Ion-translocating oxidoreductase complex subunit D from Shewanella loihica (strain ATCC BAA-1088 / PV-4).